The following is a 147-amino-acid chain: 3-hydroxyacyl-[acyl-carrier-protein] dehydratase FabZ (147 aa).

H46 is a catalytic residue.

Belongs to the thioester dehydratase family. FabZ subfamily.

The protein resides in the cytoplasm. It carries out the reaction a (3R)-hydroxyacyl-[ACP] = a (2E)-enoyl-[ACP] + H2O. In terms of biological role, involved in unsaturated fatty acids biosynthesis. Catalyzes the dehydration of short chain beta-hydroxyacyl-ACPs and long chain saturated and unsaturated beta-hydroxyacyl-ACPs. The protein is 3-hydroxyacyl-[acyl-carrier-protein] dehydratase FabZ of Syntrophobacter fumaroxidans (strain DSM 10017 / MPOB).